The following is a 621-amino-acid chain: 1,4-alpha-glucan branching enzyme GlgB (621 aa).

The Nucleophile role is filled by D302. The active-site Proton donor is E355.

It belongs to the glycosyl hydrolase 13 family. GlgB subfamily. In terms of assembly, monomer.

The enzyme catalyses Transfers a segment of a (1-&gt;4)-alpha-D-glucan chain to a primary hydroxy group in a similar glucan chain.. It functions in the pathway glycan biosynthesis; glycogen biosynthesis. Catalyzes the formation of the alpha-1,6-glucosidic linkages in glycogen by scission of a 1,4-alpha-linked oligosaccharide from growing alpha-1,4-glucan chains and the subsequent attachment of the oligosaccharide to the alpha-1,6 position. The sequence is that of 1,4-alpha-glucan branching enzyme GlgB from Dechloromonas aromatica (strain RCB).